Here is a 486-residue protein sequence, read N- to C-terminus: Aspartyl/glutamyl-tRNA(Asn/Gln) amidotransferase subunit B (486 aa).

It belongs to the GatB/GatE family. GatB subfamily. In terms of assembly, heterotrimer of A, B and C subunits.

It catalyses the reaction L-glutamyl-tRNA(Gln) + L-glutamine + ATP + H2O = L-glutaminyl-tRNA(Gln) + L-glutamate + ADP + phosphate + H(+). The enzyme catalyses L-aspartyl-tRNA(Asn) + L-glutamine + ATP + H2O = L-asparaginyl-tRNA(Asn) + L-glutamate + ADP + phosphate + 2 H(+). Allows the formation of correctly charged Asn-tRNA(Asn) or Gln-tRNA(Gln) through the transamidation of misacylated Asp-tRNA(Asn) or Glu-tRNA(Gln) in organisms which lack either or both of asparaginyl-tRNA or glutaminyl-tRNA synthetases. The reaction takes place in the presence of glutamine and ATP through an activated phospho-Asp-tRNA(Asn) or phospho-Glu-tRNA(Gln). This chain is Aspartyl/glutamyl-tRNA(Asn/Gln) amidotransferase subunit B, found in Orientia tsutsugamushi (strain Boryong) (Rickettsia tsutsugamushi).